A 580-amino-acid polypeptide reads, in one-letter code: Putative adenine deaminase YerA (580 aa).

At S399 the chain carries Phosphoserine.

The protein belongs to the metallo-dependent hydrolases superfamily. Adenine deaminase family.

It carries out the reaction adenine + H2O + H(+) = hypoxanthine + NH4(+). This Bacillus subtilis (strain 168) protein is Putative adenine deaminase YerA (yerA).